The chain runs to 196 residues: Imidazoleglycerol-phosphate dehydratase (196 aa).

The protein belongs to the imidazoleglycerol-phosphate dehydratase family.

The protein resides in the cytoplasm. The enzyme catalyses D-erythro-1-(imidazol-4-yl)glycerol 3-phosphate = 3-(imidazol-4-yl)-2-oxopropyl phosphate + H2O. It functions in the pathway amino-acid biosynthesis; L-histidine biosynthesis; L-histidine from 5-phospho-alpha-D-ribose 1-diphosphate: step 6/9. This chain is Imidazoleglycerol-phosphate dehydratase, found in Clostridium botulinum (strain ATCC 19397 / Type A).